Here is a 377-residue protein sequence, read N- to C-terminus: MTDSPVLALTKDLISRQSVTPEDAGCQDVMIARLEALGFTIERMVFEDTTNFWARRGTQAPLFAFAGHTDVVPAGKLEHWHTPPFEPTEKEGYLYGRGAADMKGSLAAMIVATERFIAEHPDHQGSIGFLITSDEEGPFINGTVRVVETLMARDENIDMCIVGEPSSTEVVGDVVKNGRRGSITGDLTVKGTQGHVAYPHLADNPVHKSLLAIHALATTEWDKGNEYFPPTSFQIPNVQAGTGASNVIPGEFHVQFNLRFSTELCNERIVERVTQTLDQHDLNYDLKWTYNGDPFLTDTGALLDAVVDAVDSVNQTKPALLTTGGTSDGRFIARMGGQVVELGPVNATIHKVNECVKIDDLEKLTDMYQKTLENLLA.

His68 provides a ligand contact to Zn(2+). The active site involves Asp70. Asp101 is a binding site for Zn(2+). The active-site Proton acceptor is Glu135. 3 residues coordinate Zn(2+): Glu136, Glu164, and His350.

Belongs to the peptidase M20A family. DapE subfamily. As to quaternary structure, homodimer. The cofactor is Zn(2+). Co(2+) is required as a cofactor.

The enzyme catalyses N-succinyl-(2S,6S)-2,6-diaminopimelate + H2O = (2S,6S)-2,6-diaminopimelate + succinate. It participates in amino-acid biosynthesis; L-lysine biosynthesis via DAP pathway; LL-2,6-diaminopimelate from (S)-tetrahydrodipicolinate (succinylase route): step 3/3. Catalyzes the hydrolysis of N-succinyl-L,L-diaminopimelic acid (SDAP), forming succinate and LL-2,6-diaminopimelate (DAP), an intermediate involved in the bacterial biosynthesis of lysine and meso-diaminopimelic acid, an essential component of bacterial cell walls. In Vibrio vulnificus (strain CMCP6), this protein is Succinyl-diaminopimelate desuccinylase.